The chain runs to 286 residues: Ribosomal RNA small subunit methyltransferase A (286 aa).

The S-adenosyl-L-methionine site is built by Asn31, Ile33, Gly58, Glu80, Asp106, and Asn125.

Belongs to the class I-like SAM-binding methyltransferase superfamily. rRNA adenine N(6)-methyltransferase family. RsmA subfamily.

Its subcellular location is the cytoplasm. The catalysed reaction is adenosine(1518)/adenosine(1519) in 16S rRNA + 4 S-adenosyl-L-methionine = N(6)-dimethyladenosine(1518)/N(6)-dimethyladenosine(1519) in 16S rRNA + 4 S-adenosyl-L-homocysteine + 4 H(+). Specifically dimethylates two adjacent adenosines (A1518 and A1519) in the loop of a conserved hairpin near the 3'-end of 16S rRNA in the 30S particle. May play a critical role in biogenesis of 30S subunits. This chain is Ribosomal RNA small subunit methyltransferase A, found in Wolbachia pipientis wMel.